We begin with the raw amino-acid sequence, 639 residues long: Extracellular metalloproteinase mep (639 aa).

Positions 1-16 (MHMLSFIGALALPVFV) are cleaved as a signal peptide. A propeptide spanning residues 17-245 (CAQSCEPASL…IHGVVDYISE (229 aa)) is cleaved from the precursor. N-linked (GlcNAc...) asparagine glycosylation is found at N287, N320, N336, and N368. H429 is a binding site for Zn(2+). Residue E430 is part of the active site. Zn(2+) is bound at residue H433. A glycan (N-linked (GlcNAc...) asparagine) is linked at N509.

It belongs to the peptidase M36 family. Zn(2+) serves as cofactor.

It localises to the secreted. Functionally, secreted metalloproteinase that allows assimilation of proteinaceous substrates. This chain is Extracellular metalloproteinase mep (mep), found in Aspergillus flavus (strain ATCC 200026 / FGSC A1120 / IAM 13836 / NRRL 3357 / JCM 12722 / SRRC 167).